We begin with the raw amino-acid sequence, 130 residues long: Lysozyme C (130 aa).

One can recognise a C-type lysozyme domain in the interval 1 to 130; it reads KTYERCELAR…VSPWIRDCGL (130 aa). 4 disulfides stabilise this stretch: Cys6-Cys128, Cys30-Cys116, Cys65-Cys81, and Cys77-Cys95. Catalysis depends on residues Glu35 and Asp53.

This sequence belongs to the glycosyl hydrolase 22 family. Monomer.

Its subcellular location is the secreted. The enzyme catalyses Hydrolysis of (1-&gt;4)-beta-linkages between N-acetylmuramic acid and N-acetyl-D-glucosamine residues in a peptidoglycan and between N-acetyl-D-glucosamine residues in chitodextrins.. Functionally, lysozymes have primarily a bacteriolytic function; those in tissues and body fluids are associated with the monocyte-macrophage system and enhance the activity of immunoagents. The sequence is that of Lysozyme C (LYZ) from Chelonia mydas (Green sea-turtle).